The sequence spans 295 residues: Reticulon-like protein 1 (295 aa).

Over methionine 1–asparagine 50 the chain is Cytoplasmic. The Reticulon domain maps to asparagine 20–alanine 220. A helical membrane pass occupies residues leucine 51–serine 73. The Lumenal portion of the chain corresponds to lysine 74–serine 142. A helical membrane pass occupies residues tryptophan 143–isoleucine 163. The Cytoplasmic portion of the chain corresponds to tyrosine 164–alanine 295. A phosphothreonine mark is found at threonine 186 and threonine 219. Residues threonine 219 to lysine 235 are compositionally biased toward polar residues. The tract at residues threonine 219 to alanine 295 is disordered. Position 232 is a phosphoserine (serine 232). The stretch at serine 265–alanine 295 forms a coiled coil.

In terms of assembly, interacts with POM33.

The protein localises to the endoplasmic reticulum membrane. The polypeptide is Reticulon-like protein 1 (RTN1) (Saccharomyces cerevisiae (strain ATCC 204508 / S288c) (Baker's yeast)).